The following is a 572-amino-acid chain: Ribonuclease Y (572 aa).

Residues 1–21 (MPTLYVILSLLLGLIGGVLVQ) traverse the membrane as a helical segment. Disordered stretches follow at residues 59 to 85 (HEAA…DAAE) and 110 to 142 (QLEA…ERED). Composition is skewed to basic and acidic residues over residues 110 to 119 (QLEAEREQAK) and 129 to 142 (LSTD…ERED). One can recognise a KH domain in the interval 262-322 (SVSVVPIPSD…LRREVARHVL (61 aa)). Positions 388-481 (VLKHSVQVAH…VAAADAISAA (94 aa)) constitute an HD domain.

It belongs to the RNase Y family.

The protein localises to the cell membrane. In terms of biological role, endoribonuclease that initiates mRNA decay. The polypeptide is Ribonuclease Y (Deinococcus radiodurans (strain ATCC 13939 / DSM 20539 / JCM 16871 / CCUG 27074 / LMG 4051 / NBRC 15346 / NCIMB 9279 / VKM B-1422 / R1)).